Here is a 243-residue protein sequence, read N- to C-terminus: 1-(5-phosphoribosyl)-5-[(5-phosphoribosylamino)methylideneamino] imidazole-4-carboxamide isomerase (243 aa).

Asp-8 functions as the Proton acceptor in the catalytic mechanism. Residue Asp-130 is the Proton donor of the active site.

Belongs to the HisA/HisF family.

It is found in the cytoplasm. The catalysed reaction is 1-(5-phospho-beta-D-ribosyl)-5-[(5-phospho-beta-D-ribosylamino)methylideneamino]imidazole-4-carboxamide = 5-[(5-phospho-1-deoxy-D-ribulos-1-ylimino)methylamino]-1-(5-phospho-beta-D-ribosyl)imidazole-4-carboxamide. It functions in the pathway amino-acid biosynthesis; L-histidine biosynthesis; L-histidine from 5-phospho-alpha-D-ribose 1-diphosphate: step 4/9. The sequence is that of 1-(5-phosphoribosyl)-5-[(5-phosphoribosylamino)methylideneamino] imidazole-4-carboxamide isomerase from Cellvibrio japonicus (strain Ueda107) (Pseudomonas fluorescens subsp. cellulosa).